The following is a 134-amino-acid chain: D-dopachrome decarboxylase-like protein (134 aa).

This sequence belongs to the MIF family.

The protein resides in the cytoplasm. In terms of biological role, may have lyase activity. The sequence is that of D-dopachrome decarboxylase-like protein (DDTL) from Homo sapiens (Human).